Reading from the N-terminus, the 440-residue chain is Syntrophin-1 (440 aa).

2 PH domains span residues 2-208 and 227-340; these read AAVR…ACTT and QVRH…IGGY. A PDZ domain is found at 45-128; it reads TVRVVKYDGN…VVDLQVQYRR (84 aa). The SU domain maps to 384 to 440; that stretch reads SFETIRATGDDGGRFLWVDFGPPHGEQELDLLNSAKPVVFILHSFLATKVYRLGLYA.

The protein belongs to the syntrophin family. As to quaternary structure, component of the dystrophin glycoprotein complex (DGC). Interacts with dyb-1, dys-1 and snf-6 to form the DGC. As to expression, expressed in neurons and muscles; particularly strong expression in the body wall, head and vulval muscles, and in ventral nerve cord (at protein level).

Its subcellular location is the membrane. The protein resides in the cytoplasm. It is found in the cytoskeleton. In terms of biological role, adapter protein that binds to and probably organizes the subcellular localization of a variety of membrane proteins. May link various receptors to the actin cytoskeleton and the dystrophin glycoprotein complex (DGC). May also act by slowing calcium channel activity via a direct or indirect mechanism potentially involving other second messengers. Plays an early role in the formation of the neuromuscular junction and is necessary for muscle maintenance. The protein is Syntrophin-1 of Caenorhabditis elegans.